A 179-amino-acid polypeptide reads, in one-letter code: Large ribosomal subunit protein uL6 (179 aa).

It belongs to the universal ribosomal protein uL6 family. As to quaternary structure, part of the 50S ribosomal subunit.

This protein binds to the 23S rRNA, and is important in its secondary structure. It is located near the subunit interface in the base of the L7/L12 stalk, and near the tRNA binding site of the peptidyltransferase center. This is Large ribosomal subunit protein uL6 from Prochlorococcus marinus (strain MIT 9313).